Here is a 273-residue protein sequence, read N- to C-terminus: Dermonecrotic toxin LhSicTox-alphaIA2av (273 aa).

Residue histidine 5 is part of the active site. Mg(2+) contacts are provided by glutamate 25 and aspartate 27. Histidine 41 functions as the Nucleophile in the catalytic mechanism. 2 disulfides stabilise this stretch: cysteine 45–cysteine 51 and cysteine 47–cysteine 190. A Mg(2+)-binding site is contributed by aspartate 85.

This sequence belongs to the arthropod phospholipase D family. Class II subfamily. Requires Mg(2+) as cofactor. As to expression, expressed by the venom gland.

The protein localises to the secreted. The catalysed reaction is an N-(acyl)-sphingosylphosphocholine = an N-(acyl)-sphingosyl-1,3-cyclic phosphate + choline. The enzyme catalyses an N-(acyl)-sphingosylphosphoethanolamine = an N-(acyl)-sphingosyl-1,3-cyclic phosphate + ethanolamine. It catalyses the reaction a 1-acyl-sn-glycero-3-phosphocholine = a 1-acyl-sn-glycero-2,3-cyclic phosphate + choline. It carries out the reaction a 1-acyl-sn-glycero-3-phosphoethanolamine = a 1-acyl-sn-glycero-2,3-cyclic phosphate + ethanolamine. Functionally, dermonecrotic toxins cleave the phosphodiester linkage between the phosphate and headgroup of certain phospholipids (sphingolipid and lysolipid substrates), forming an alcohol (often choline) and a cyclic phosphate. This toxin acts on sphingomyelin (SM). It may also act on ceramide phosphoethanolamine (CPE), lysophosphatidylcholine (LPC) and lysophosphatidylethanolamine (LPE), but not on lysophosphatidylserine (LPS), and lysophosphatidylglycerol (LPG). It acts by transphosphatidylation, releasing exclusively cyclic phosphate products as second products. Induces dermonecrosis, hemolysis, increased vascular permeability, edema, inflammatory response, and platelet aggregation. This is Dermonecrotic toxin LhSicTox-alphaIA2av from Loxosceles hirsuta (Recluse spider).